The chain runs to 434 residues: Enolase (434 aa).

Gln166 contributes to the (2R)-2-phosphoglycerate binding site. Glu208 (proton donor) is an active-site residue. Residues Asp245, Glu290, and Asp317 each coordinate Mg(2+). Residues Lys342, Arg371, Ser372, and Lys393 each contribute to the (2R)-2-phosphoglycerate site. The Proton acceptor role is filled by Lys342.

Belongs to the enolase family. Mg(2+) is required as a cofactor.

Its subcellular location is the cytoplasm. It is found in the secreted. The protein localises to the cell surface. It carries out the reaction (2R)-2-phosphoglycerate = phosphoenolpyruvate + H2O. It participates in carbohydrate degradation; glycolysis; pyruvate from D-glyceraldehyde 3-phosphate: step 4/5. Its function is as follows. Catalyzes the reversible conversion of 2-phosphoglycerate (2-PG) into phosphoenolpyruvate (PEP). It is essential for the degradation of carbohydrates via glycolysis. This Caldicellulosiruptor bescii (strain ATCC BAA-1888 / DSM 6725 / KCTC 15123 / Z-1320) (Anaerocellum thermophilum) protein is Enolase.